The chain runs to 146 residues: Pseudoazurin (146 aa).

Residues 1 to 23 (MRNIAIKFAAAGILAMLAAPALA) form the signal peptide. A Plastocyanin-like domain is found at 28–116 (VHMLNKGAEG…MGMIALIAVG (89 aa)). 4 residues coordinate Cu cation: H63, C101, H104, and M109.

Requires Cu cation as cofactor.

The protein resides in the periplasm. Functionally, this soluble electron transfer copper protein is required for the inactivation of copper-containing nitrite reductase in the presence of oxygen. Serves as a direct electron donor to the nitrite reductase. The sequence is that of Pseudoazurin from Alcaligenes faecalis.